Consider the following 416-residue polypeptide: Calreticulin (416 aa).

Residues 1–17 form the signal peptide; the sequence is MLLSVPLLLGLLGLAAA. The tract at residues 18 to 197 is N-domain; that stretch reads DPAIYFKEQF…NSQVESGSLE (180 aa). Ca(2+) is bound at residue glutamine 26. Lysine 48 carries the N6-acetyllysine modification. The Ca(2+) site is built by lysine 62 and lysine 64. An N6-(2-hydroxyisobutyryl)lysine modification is found at lysine 64. Cysteines 105 and 137 form a disulfide. An alpha-D-glucoside-binding residues include tyrosine 109, lysine 111, tyrosine 128, and aspartate 135. The residue at position 159 (lysine 159) is an N6-acetyllysine. A 1-1 repeat occupies 191 to 202; sequence VESGSLEDDWDF. Residues 191 to 255 form a 4 X approximate repeats region; the sequence is VESGSLEDDW…DAKKPEDWDE (65 aa). The segment at 193-277 is disordered; the sequence is SGSLEDDWDF…NPEYKGEWKP (85 aa). Positions 198–308 are P-domain; that stretch reads DDWDFLPPKK…YSPDANIYAY (111 aa). Over residues 207-251 the composition is skewed to basic and acidic residues; the sequence is KIKDPDAAKPEDWDERAKIDDPTDSKPEDWDKPEHIPDPDAKKPE. At lysine 209 the chain carries N6-acetyllysine. A run of 6 repeats spans residues 210 to 221, 227 to 238, 244 to 255, 259 to 269, 273 to 283, and 287 to 297. The interval 237–270 is interaction with PPIB; it reads DKPEHIPDPDAKKPEDWDEEMDGEWEPPVIQNPE. A compositionally biased stretch (acidic residues) spans 252–261; that stretch reads DWDEEMDGEW. Residues 259 to 297 are 3 X approximate repeats; sequence GEWEPPVIQNPEYKGEWKPRQIDNPDYKGTWIHPEIDNP. Residues 309–416 are C-domain; it reads DSFAVLGLDL…ESPGQAKDEL (108 aa). Aspartate 317 contacts an alpha-D-glucoside. A Ca(2+)-binding site is contributed by aspartate 328. The segment at 350–416 is disordered; the sequence is TKAAEKQMKD…ESPGQAKDEL (67 aa). Over residues 352-379 the composition is skewed to basic and acidic residues; that stretch reads AAEKQMKDKQDEEQRLKEEEEDKKRKEE. Acidic residues predominate over residues 380–408; the sequence is EEAEDKEDDDDRDEDEDEEDEKEEDEEES. The Prevents secretion from ER signature appears at 413-416; sequence KDEL.

This sequence belongs to the calreticulin family. Monomer. Interacts with GABARAP, NR3C1, PDIA3/ERp57 and TRIM21. Interacts (via P-domain) with PDIA5. Interacts with PPIB. Interacts with SPACA9. Component of an EIF2 complex at least composed of CELF1/CUGBP1, CALR, CALR3, EIF2S1, EIF2S2, HSP90B1 and HSPA5. Interacts with CLCC1.

The protein resides in the endoplasmic reticulum lumen. It localises to the cytoplasm. The protein localises to the cytosol. It is found in the cytolytic granule. Its subcellular location is the secreted. The protein resides in the extracellular space. It localises to the extracellular matrix. The protein localises to the cell surface. It is found in the sarcoplasmic reticulum lumen. Its subcellular location is the cytoplasmic vesicle. The protein resides in the secretory vesicle. It localises to the cortical granule. Calcium-binding chaperone that promotes folding, oligomeric assembly and quality control in the endoplasmic reticulum (ER) via the calreticulin/calnexin cycle. This lectin interacts transiently with almost all of the monoglucosylated glycoproteins that are synthesized in the ER. Interacts with the DNA-binding domain of NR3C1 and mediates its nuclear export. Involved in maternal gene expression regulation. May participate in oocyte maturation via the regulation of calcium homeostasis. Present in the cortical granules of non-activated oocytes, is exocytosed during the cortical reaction in response to oocyte activation and might participate in the block to polyspermy. This chain is Calreticulin (Calr), found in Mus musculus (Mouse).